A 736-amino-acid polypeptide reads, in one-letter code: Fidgetin (736 aa).

Disordered stretches follow at residues 118 to 155 (GMTP…CGNH), 180 to 248 (TYSG…YSPG), 272 to 295 (IPGY…GSSA), and 341 to 438 (STRG…AEEQ). Residues 128 to 150 (VTASVGSSTGVASSLSEPSYSSS) show a composition bias toward low complexity. Residues 205-214 (QPPPPPPPTL) show a composition bias toward pro residues. A compositionally biased stretch (low complexity) spans 216–232 (PSYNTSSPNLSSYNYPP). A compositionally biased stretch (polar residues) spans 352 to 368 (DTSSLAFKPTKQSMPTD). Residues A467 and 507–512 (GTGRTL) contribute to the ATP site.

Belongs to the AAA ATPase family.

It localises to the nucleus matrix. The protein resides in the cytoplasm. It is found in the cytoskeleton. Its subcellular location is the microtubule organizing center. The protein localises to the centrosome. Its function is as follows. ATP-dependent microtubule severing protein. Severs microtubules along their length and depolymerizes their ends, primarily the minus-end, suppressing microtubule growth from and attachment to centrosomes. Microtubule severing may promote rapid reorganization of cellular microtubule arrays and the release of microtubules from the centrosome following nucleation. Microtubule release from the mitotic spindle poles may allow depolymerization of the microtubule end proximal to the spindle pole, leading to poleward microtubule flux and poleward motion of chromosome. This chain is Fidgetin (fign), found in Danio rerio (Zebrafish).